The chain runs to 257 residues: 5'-nucleotidase SurE (257 aa).

A divalent metal cation contacts are provided by Asp11, Asp12, Ser42, and Asn99.

Belongs to the SurE nucleotidase family. A divalent metal cation serves as cofactor.

It is found in the cytoplasm. It catalyses the reaction a ribonucleoside 5'-phosphate + H2O = a ribonucleoside + phosphate. Its function is as follows. Nucleotidase that shows phosphatase activity on nucleoside 5'-monophosphates. This Flavobacterium psychrophilum (strain ATCC 49511 / DSM 21280 / CIP 103535 / JIP02/86) protein is 5'-nucleotidase SurE.